The sequence spans 208 residues: NAD-dependent protein deacylase (208 aa).

Positions 1-208 (MKPICVVLSG…NTGFNPVTGW (208 aa)) constitute a Deacetylase sirtuin-type domain. Position 10–29 (10–29 (GAGISAESGIPTYRAEDGLW)) interacts with NAD(+). The substrate site is built by Tyr54 and Arg57. NAD(+) is bound at residue 87–90 (QNVE). The active-site Proton acceptor is His105. NAD(+) is bound by residues 170-172 (GTS) and 197-199 (NPN).

This sequence belongs to the sirtuin family. Class III subfamily.

Its subcellular location is the cytoplasm. The catalysed reaction is N(6)-acetyl-L-lysyl-[protein] + NAD(+) + H2O = 2''-O-acetyl-ADP-D-ribose + nicotinamide + L-lysyl-[protein]. It carries out the reaction N(6)-succinyl-L-lysyl-[protein] + NAD(+) + H2O = 2''-O-succinyl-ADP-D-ribose + nicotinamide + L-lysyl-[protein]. Functionally, NAD-dependent lysine deacetylase and desuccinylase that specifically removes acetyl and succinyl groups on target proteins. Modulates the activities of several proteins which are inactive in their acylated form. The polypeptide is NAD-dependent protein deacylase (Aggregatibacter actinomycetemcomitans (Actinobacillus actinomycetemcomitans)).